The chain runs to 194 residues: Protein GrpE (194 aa).

The segment covering methionine 1–glutamine 24 has biased composition (basic and acidic residues). Residues methionine 1–glutamate 41 form a disordered region.

Belongs to the GrpE family. Homodimer.

Its subcellular location is the cytoplasm. Participates actively in the response to hyperosmotic and heat shock by preventing the aggregation of stress-denatured proteins, in association with DnaK and GrpE. It is the nucleotide exchange factor for DnaK and may function as a thermosensor. Unfolded proteins bind initially to DnaJ; upon interaction with the DnaJ-bound protein, DnaK hydrolyzes its bound ATP, resulting in the formation of a stable complex. GrpE releases ADP from DnaK; ATP binding to DnaK triggers the release of the substrate protein, thus completing the reaction cycle. Several rounds of ATP-dependent interactions between DnaJ, DnaK and GrpE are required for fully efficient folding. The sequence is that of Protein GrpE from Carboxydothermus hydrogenoformans (strain ATCC BAA-161 / DSM 6008 / Z-2901).